We begin with the raw amino-acid sequence, 535 residues long: T-complex protein 1 subunit beta (535 aa).

An N-acetylalanine modification is found at Ala-2. Ser-3 is subject to Phosphoserine. An N6-acetyllysine modification is found at Lys-13. An ADP-binding site is contributed by Gly-44. An ATP-binding site is contributed by Gly-44. Ser-60 carries the phosphoserine modification. Residue Asp-97 coordinates Mg(2+). Residues Gly-98, Thr-99, Thr-100, and Ser-101 each coordinate ADP. ATP contacts are provided by Gly-98, Thr-99, and Thr-100. Lys-154 is subject to N6-acetyllysine. 2 residues coordinate ADP: Ser-168 and Ser-169. Position 181 is an N6-acetyllysine (Lys-181). Residue Lys-248 forms a Glycyl lysine isopeptide (Lys-Gly) (interchain with G-Cter in SUMO2) linkage. Phosphoserine is present on Ser-260. Thr-261 carries the post-translational modification Phosphothreonine. 3 residues coordinate ADP: Gly-410, Glu-495, and Lys-500. Glu-495 and Lys-500 together coordinate ATP.

The protein belongs to the TCP-1 chaperonin family. In terms of assembly, component of the chaperonin-containing T-complex (TRiC), a hexadecamer composed of two identical back-to-back stacked rings enclosing a protein folding chamber. Each ring is made up of eight different subunits: TCP1/CCT1, CCT2, CCT3, CCT4, CCT5, CCT6A/CCT6, CCT7, CCT8. Interacts with PACRG. Interacts with FLCN. Interacts with DLEC1. Interacts with SVEP1.

It is found in the cytoplasm. It catalyses the reaction ATP + H2O = ADP + phosphate + H(+). Component of the chaperonin-containing T-complex (TRiC), a molecular chaperone complex that assists the folding of actin, tubulin and other proteins upon ATP hydrolysis. The TRiC complex mediates the folding of WRAP53/TCAB1, thereby regulating telomere maintenance. As part of the TRiC complex may play a role in the assembly of BBSome, a complex involved in ciliogenesis regulating transports vesicles to the cilia. The chain is T-complex protein 1 subunit beta (CCT2) from Bos taurus (Bovine).